Here is a 520-residue protein sequence, read N- to C-terminus: Vacuolar protein sorting-associated protein 9A (520 aa).

A VPS9 domain is found at 102–246 (VIADEKLFQK…ISNIDAKSIS (145 aa)). Residues N180 and D185 each contribute to the GTP site. Disordered stretches follow at residues 267–331 (DSQT…AESI), 396–433 (LAPS…ETDR), and 464–520 (LVEG…EASE). A compositionally biased stretch (polar residues) spans 287–323 (LQKTQSLNPKRENTLFQSKSSDSLSGTNELLNINSET). The residue at position 330 (S330) is a Phosphoserine. The span at 396 to 407 (LAPSSSPLQASS) shows a compositional bias: low complexity. Composition is skewed to basic and acidic residues over residues 413–433 (KESE…ETDR) and 464–497 (LVEG…REGD).

Homodimer. The homodimer interacts with RABF2B. Interacts with RABF1 and RABF2A. As to expression, widely expressed.

Its function is as follows. Functions as a guanine nucleotide exchange factor (GEF) for Rab small GTPases. Activates specifically RABF1, RABF2A and RABF2B proteins. Required for early stages of embryogenesis, cytokinesis, embryogenesis, and organ development. Is essential for the establishment or maintenance of the polar localization of the auxin efflux carrier PIN1. This Arabidopsis thaliana (Mouse-ear cress) protein is Vacuolar protein sorting-associated protein 9A.